The following is a 469-amino-acid chain: MVVLAVLLPVVFGALLLLGLPRALGVLGAGLSFLLNLYLFLTHPGGVAHAFQAPLLPGAGVYWAFGLDGLSALFFLTIALTVFLGALVARVEGRFLGLALLMEGLLLGLFAARDLLVFYVFFEAALIPALLMLYLYGGEGRTRALYTFVLFTLVGSLPMLAAVLGARLLSGSPTFLLEDLLAHPLQEEAAFWVFLGFALAFAIKTPLFPLHAWLPPFHQENHPSGLADALGTLYKVGVFAFFRFAIPLAPEGFAQAQGLLLFLAALSALYGAWVAFAAKDFKTLLAYAGLSHMGVAALGVFSGTPEGAMGGLYLLAASGVYTGGLFLLAGRLYERTGTLEIGRYRGLAQSAPGLAALALILFLAMVGLPGLSGFPGEFLTLLGAYKASPWLAALAFLSVIASAAYALTAFQKTFWEEGGSGVKDLAGAEWGFALLSVLALLLMGVFPGYFARGLHPLAEAFAKLLGGGA.

Helical transmembrane passes span 1–21 (MVVLAVLLPVVFGALLLLGLP), 23–43 (ALGVLGAGLSFLLNLYLFLTH), 47–67 (VAHAFQAPLLPGAGVYWAFGL), 69–89 (GLSALFFLTIALTVFLGALVA), 91–111 (VEGRFLGLALLMEGLLLGLFA), 115–135 (LLVFYVFFEAALIPALLMLYL), 144–164 (ALYTFVLFTLVGSLPMLAAVL), 190–210 (AFWVFLGFALAFAIKTPLFPL), 258–278 (GLLLFLAALSALYGAWVAFAA), 284–304 (LLAYAGLSHMGVAALGVFSGT), 308–328 (AMGGLYLLAASGVYTGGLFLL), 354–374 (LAALALILFLAMVGLPGLSGF), 390–410 (WLAALAFLSVIASAAYALTAF), and 430–450 (WGFALLSVLALLLMGVFPGYF).

Belongs to the complex I subunit 4 family. NDH-1 is composed of 15 different subunits, Nqo1 to Nqo15. The complex has a L-shaped structure, with the hydrophobic arm (subunits Nqo7, Nqo8 and Nqo10 to Nqo14) embedded in the membrane and the hydrophilic peripheral arm (subunits Nqo1 to Nqo6, Nqo9 and Nqo15) protruding into the bacterial cytoplasm. The hydrophilic domain contains all the redox centers.

It localises to the cell inner membrane. The catalysed reaction is a quinone + NADH + 5 H(+)(in) = a quinol + NAD(+) + 4 H(+)(out). In terms of biological role, NDH-1 shuttles electrons from NADH, via FMN and iron-sulfur (Fe-S) centers, to quinones in the respiratory chain. The immediate electron acceptor for the enzyme in this species is menaquinone. Couples the redox reaction to proton translocation (for every two electrons transferred, four hydrogen ions are translocated across the cytoplasmic membrane), and thus conserves the redox energy in a proton gradient required for the synthesis of ATP. The sequence is that of NADH-quinone oxidoreductase subunit 13 (nqo13) from Thermus thermophilus (strain ATCC 27634 / DSM 579 / HB8).